A 186-amino-acid polypeptide reads, in one-letter code: Protein GrpE (186 aa).

Residues 1 to 17 (MKDEHNQEHDLSQKELE) are compositionally biased toward basic and acidic residues. The disordered stretch occupies residues 1 to 32 (MKDEHNQEHDLSQKELESCENSCTCEGKKQEA).

Belongs to the GrpE family. In terms of assembly, homodimer.

Its subcellular location is the cytoplasm. In terms of biological role, participates actively in the response to hyperosmotic and heat shock by preventing the aggregation of stress-denatured proteins, in association with DnaK and GrpE. It is the nucleotide exchange factor for DnaK and may function as a thermosensor. Unfolded proteins bind initially to DnaJ; upon interaction with the DnaJ-bound protein, DnaK hydrolyzes its bound ATP, resulting in the formation of a stable complex. GrpE releases ADP from DnaK; ATP binding to DnaK triggers the release of the substrate protein, thus completing the reaction cycle. Several rounds of ATP-dependent interactions between DnaJ, DnaK and GrpE are required for fully efficient folding. The polypeptide is Protein GrpE (Helicobacter acinonychis (strain Sheeba)).